The sequence spans 376 residues: Phytanoyl-CoA hydroxylase-interacting protein-like (376 aa).

S12 and S15 each carry phosphoserine. N-linked (GlcNAc...) asparagine glycosylation is present at N23. Position 25 is a phosphoserine (S25). N-linked (GlcNAc...) asparagine glycosylation occurs at N37. The Fibronectin type-III domain maps to 52–161; sequence VPHNIKISNI…EIIEFCTADY (110 aa).

The protein belongs to the PHYHIP family.

May play a role in the development of the central system. The protein is Phytanoyl-CoA hydroxylase-interacting protein-like (PHYHIPL) of Homo sapiens (Human).